Reading from the N-terminus, the 793-residue chain is Nuclear cap-binding protein subunit 1 (793 aa).

The MIF4G domain maps to glutamate 28 to arginine 242.

Belongs to the NCBP1 family. In terms of assembly, component of the nuclear cap-binding complex (CBC), a heterodimer composed of ncbp-1 and ncbp-1 that interacts with m7GpppG-capped RNA.

The protein localises to the nucleus. Functionally, component of the cap-binding complex (CBC), which binds cotranscriptionally to the 5'-cap of pre-mRNAs and is involved in various processes such as pre-mRNA splicing and RNA-mediated gene silencing (RNAi). The CBC complex is involved in miRNA-mediated RNA interference and is required for primary microRNAs (miRNAs) processing. In the CBC complex, ncbp-1 does not bind directly capped RNAs (m7GpppG-capped RNA) but is required to stabilize the movement of the N-terminal loop of ncbp-2 and lock the CBC into a high affinity cap-binding state with the cap structure. This chain is Nuclear cap-binding protein subunit 1 (ncbp-1), found in Caenorhabditis briggsae.